Here is a 256-residue protein sequence, read N- to C-terminus: 6-carboxyhexanoate--CoA ligase (256 aa).

The protein belongs to the BioW family. In terms of assembly, homodimer. Requires Mg(2+) as cofactor.

It catalyses the reaction heptanedioate + ATP + CoA = 6-carboxyhexanoyl-CoA + AMP + diphosphate. It participates in metabolic intermediate metabolism; pimeloyl-CoA biosynthesis; pimeloyl-CoA from pimelate: step 1/1. Catalyzes the transformation of pimelate into pimeloyl-CoA with concomitant hydrolysis of ATP to AMP. In Bacillus velezensis (strain DSM 23117 / BGSC 10A6 / LMG 26770 / FZB42) (Bacillus amyloliquefaciens subsp. plantarum), this protein is 6-carboxyhexanoate--CoA ligase.